The chain runs to 150 residues: Probable FKBP-type 16 kDa peptidyl-prolyl cis-trans isomerase (150 aa).

The 75-residue stretch at 14–88 folds into the PPIase FKBP-type domain; the sequence is NTEVTLHFAL…PNPQNVQIIP (75 aa).

The protein belongs to the FKBP-type PPIase family.

It catalyses the reaction [protein]-peptidylproline (omega=180) = [protein]-peptidylproline (omega=0). Its function is as follows. PPIases accelerate the folding of proteins. This Pseudomonas fluorescens protein is Probable FKBP-type 16 kDa peptidyl-prolyl cis-trans isomerase (yaaD).